A 710-amino-acid polypeptide reads, in one-letter code: Cyclomaltodextrin glucanotransferase (710 aa).

An N-terminal signal peptide occupies residues 1-27 (MKKTFKLILVLMLSLTLVFGLTAPIQA). Residues Asp54, Asn56, Asn59, Asn60, Gly78, and Asp80 each contribute to the Ca(2+) site. 128–129 (YW) contributes to the substrate binding site. Asn167 contributes to the Ca(2+) binding site. Residue His168 coordinates substrate. Position 218 (Ile218) interacts with Ca(2+). 221-224 (NLFD) is a binding site for substrate. Asp227 contributes to the Ca(2+) binding site. A substrate-binding site is contributed by Arg255. The active-site Nucleophile is Asp257. 260 to 261 (KH) contributes to the substrate binding site. Residue His261 participates in Ca(2+) binding. Glu285 acts as the Proton donor in catalysis. His355, Asp398, and Arg402 together coordinate substrate. Residues 526–603 (PLIGHVGPTM…GATSNTYNNI (78 aa)) enclose the IPT/TIG domain. The region spanning 605-710 (ILTGNQICVR…TGTVIVNWQQ (106 aa)) is the CBM20 domain.

Belongs to the glycosyl hydrolase 13 family. Ca(2+) serves as cofactor.

The protein localises to the secreted. The enzyme catalyses Cyclizes part of a (1-&gt;4)-alpha-D-glucan chain by formation of a (1-&gt;4)-alpha-D-glucosidic bond.. Functionally, degrades starch to alpha-, beta-, and gamma-cyclodextrins, as well as linear sugars. This Thermoanaerobacterium thermosulfurigenes (Clostridium thermosulfurogenes) protein is Cyclomaltodextrin glucanotransferase (amyA).